The sequence spans 200 residues: H-2 class I histocompatibility antigen, Q9 alpha chain (200 aa).

Positions 1-21 (MALTMLLLLVAAALTLIETRA) are cleaved as a signal peptide. The tract at residues 22 to 111 (GQHSLQYFHT…AQSYYNQSKG (90 aa)) is alpha-1. Over 22–200 (GQHSLQYFHT…RYLELGKETL (179 aa)) the chain is Extracellular. Asparagine 107 carries N-linked (GlcNAc...) asparagine glycosylation. Residues 112 to 200 (GSHTLQWMYG…RYLELGKETL (89 aa)) form an alpha-2 region. A disulfide bond links cysteine 122 and cysteine 185.

It belongs to the MHC class I family. In terms of assembly, heterodimer of an alpha chain and a beta chain (beta-2-microglobulin).

It localises to the membrane. Its function is as follows. Involved in the presentation of foreign antigens to the immune system. In Mus musculus (Mouse), this protein is H-2 class I histocompatibility antigen, Q9 alpha chain (H2-Q9).